The sequence spans 163 residues: Nucleotide-binding protein syc0675_c (163 aa).

The protein belongs to the YajQ family.

Its function is as follows. Nucleotide-binding protein. This chain is Nucleotide-binding protein syc0675_c, found in Synechococcus sp. (strain ATCC 27144 / PCC 6301 / SAUG 1402/1) (Anacystis nidulans).